The chain runs to 66 residues: Beta-mammal toxin Cv5 (66 aa).

Residues Lys1 to Asn66 enclose the LCN-type CS-alpha/beta domain. Disulfide bonds link Cys12-Cys65, Cys16-Cys41, Cys25-Cys46, and Cys29-Cys48.

In terms of tissue distribution, expressed by the venom gland.

The protein resides in the secreted. With respect to regulation, is susceptible to be neutralized by human antibodies scFvs 10FG2 and HV. In terms of biological role, beta toxins bind voltage-independently at site-4 of sodium channels (Nav) and reduces peak current and shifts the voltage of activation toward more negative potentials thereby affecting sodium channel activation and promoting spontaneous and repetitive firing. This toxin is moderately toxic to mice. This Centruroides villegasi (Scorpion) protein is Beta-mammal toxin Cv5.